A 569-amino-acid chain; its full sequence is uncharacterized protein (569 aa).

The first 22 residues, 1–22, serve as a signal peptide directing secretion; it reads MSLLVKAALILKCASMLQGVSA. Residues 498 to 541 form a disordered region; that stretch reads RETSILDSTNTTSTNATNTTTTTSSSSTASSSASASSSTSATSG. Positions 505-540 are enriched in low complexity; it reads STNTTSTNATNTTTTTSSSSTASSSASASSSTSATS.

The protein resides in the secreted. It localises to the cell surface. This is an uncharacterized protein from Schizosaccharomyces pombe (strain 972 / ATCC 24843) (Fission yeast).